We begin with the raw amino-acid sequence, 203 residues long: dITP/XTP pyrophosphatase (203 aa).

Residue 15 to 20 (SGNAGK) participates in substrate binding. 2 residues coordinate Mg(2+): glutamate 45 and aspartate 74. Aspartate 74 acts as the Proton acceptor in catalysis. Substrate is bound by residues serine 75, 153-156 (FGYD), lysine 176, and 181-182 (HR).

This sequence belongs to the HAM1 NTPase family. Homodimer. Mg(2+) serves as cofactor.

It catalyses the reaction XTP + H2O = XMP + diphosphate + H(+). It carries out the reaction dITP + H2O = dIMP + diphosphate + H(+). The catalysed reaction is ITP + H2O = IMP + diphosphate + H(+). Pyrophosphatase that catalyzes the hydrolysis of nucleoside triphosphates to their monophosphate derivatives, with a high preference for the non-canonical purine nucleotides XTP (xanthosine triphosphate), dITP (deoxyinosine triphosphate) and ITP. Seems to function as a house-cleaning enzyme that removes non-canonical purine nucleotides from the nucleotide pool, thus preventing their incorporation into DNA/RNA and avoiding chromosomal lesions. The chain is dITP/XTP pyrophosphatase from Prochlorococcus marinus (strain MIT 9313).